Here is a 964-residue protein sequence, read N- to C-terminus: uncharacterized protein (964 aa).

Disordered regions lie at residues 1–31 (MDSE…SDCE) and 169–199 (EETY…DEIS). The span at 10 to 27 (HSICNSVSSGENYKSPES) shows a compositional bias: polar residues. Residues 656-840 (EVMESLQVEI…LILNQTSMAK (185 aa)) adopt a coiled-coil conformation.

This is an uncharacterized protein from Caenorhabditis elegans.